Consider the following 390-residue polypeptide: Succinyl-diaminopimelate desuccinylase (390 aa).

His-74 provides a ligand contact to Zn(2+). Asp-76 is a catalytic residue. Residue Asp-107 coordinates Zn(2+). Residue Glu-140 is the Proton acceptor of the active site. 3 residues coordinate Zn(2+): Glu-141, Glu-169, and His-363.

This sequence belongs to the peptidase M20A family. DapE subfamily. In terms of assembly, homodimer. Zn(2+) serves as cofactor. It depends on Co(2+) as a cofactor.

It carries out the reaction N-succinyl-(2S,6S)-2,6-diaminopimelate + H2O = (2S,6S)-2,6-diaminopimelate + succinate. Its pathway is amino-acid biosynthesis; L-lysine biosynthesis via DAP pathway; LL-2,6-diaminopimelate from (S)-tetrahydrodipicolinate (succinylase route): step 3/3. Catalyzes the hydrolysis of N-succinyl-L,L-diaminopimelic acid (SDAP), forming succinate and LL-2,6-diaminopimelate (DAP), an intermediate involved in the bacterial biosynthesis of lysine and meso-diaminopimelic acid, an essential component of bacterial cell walls. The chain is Succinyl-diaminopimelate desuccinylase from Bartonella bacilliformis (strain ATCC 35685 / KC583 / Herrer 020/F12,63).